Here is a 482-residue protein sequence, read N- to C-terminus: PHD finger protein At3g20280 (482 aa).

The PHD-type zinc finger occupies 45–97 (AMACQICEVTINEMDTLLICDACEKAYHLKCLQGNNMKGVPKSEWHCSRCVQA). Disordered stretches follow at residues 188–210 (TNIGSQGSKENVACGANSPAPVS) and 314–482 (SSNS…ENAA). The span at 314 to 324 (SSNSQQAVSHS) shows a compositional bias: low complexity. 2 stretches are compositionally biased toward polar residues: residues 377–386 (ACQNHPTASP) and 393–428 (QDSTITAAPSVTQEDSAFNTEKTPPQPLSVSSNYDS). The segment covering 447-482 (DSEKGKGLNGLDDRHQEQPSEPEFYKSDSVKEENAA) has biased composition (basic and acidic residues).

The protein is PHD finger protein At3g20280 of Arabidopsis thaliana (Mouse-ear cress).